The following is a 350-amino-acid chain: Probable transposase-like protein At4g04430 (350 aa).

Disordered stretches follow at residues 1–57 (MPSD…PSVN) and 307–328 (QIGQANPNEPPVSAAPEPQVAN). Residues 30–43 (SGVQGSGSRSGSTV) show a composition bias toward low complexity.

Belongs to the transposase 24 family.

The protein is Probable transposase-like protein At4g04430 of Arabidopsis thaliana (Mouse-ear cress).